The sequence spans 152 residues: Transcriptional regulator MraZ (152 aa).

SpoVT-AbrB domains are found at residues 5–52 (ASAI…PIHE) and 81–124 (AHEV…DEQS).

This sequence belongs to the MraZ family. As to quaternary structure, forms oligomers.

The protein resides in the cytoplasm. It is found in the nucleoid. The chain is Transcriptional regulator MraZ from Shewanella baltica (strain OS223).